Here is a 241-residue protein sequence, read N- to C-terminus: Proteasome subunit alpha type-5 (241 aa).

The protein belongs to the peptidase T1A family. In terms of assembly, the 26S proteasome consists of a 20S proteasome core and two 19S regulatory subunits. The 20S proteasome core is composed of 28 subunits that are arranged in four stacked rings, resulting in a barrel-shaped structure. The two end rings are each formed by seven alpha subunits, and the two central rings are each formed by seven beta subunits. The catalytic chamber with the active sites is on the inside of the barrel.

Its subcellular location is the cytoplasm. The protein resides in the nucleus. Functionally, the proteasome is a multicatalytic proteinase complex which is characterized by its ability to cleave peptides with Arg, Phe, Tyr, Leu, and Glu adjacent to the leaving group at neutral or slightly basic pH. The proteasome has an ATP-dependent proteolytic activity. The sequence is that of Proteasome subunit alpha type-5 (psmA5) from Dictyostelium discoideum (Social amoeba).